A 476-amino-acid chain; its full sequence is Ataxin-10 (476 aa).

Arg-10 bears the Omega-N-methylarginine mark. Phosphoserine is present on residues Ser-13 and Ser-78. Thr-83 is subject to Phosphothreonine. Ser-431 is modified (phosphoserine).

This sequence belongs to the ataxin-10 family. Homooligomer. Interacts with GNB2. Interacts with IQCB1. Interacts with OGT. Post-translationally, polyubiquitinated. In terms of processing, phosphorylation at Ser-13 by AURKB promotes the association of ATXN10 with PLK1. Phosphorylation at Ser-78 and Thr-83 by PLK1 may play a role in the regulation of cytokinesis and may stimulate the proteasome-mediated degradation of ATXN10.

Its subcellular location is the cytoplasm. It is found in the perinuclear region. It localises to the midbody. The protein localises to the cytoskeleton. The protein resides in the cilium basal body. Its subcellular location is the microtubule organizing center. It is found in the centrosome. It localises to the centriole. Functionally, may play a role in the regulation of cytokinesis. May play a role in signaling by stimulating protein glycosylation. Induces neuritogenesis by activating the Ras-MAP kinase pathway and is necessary for the survival of cerebellar neurons. Does not appear to play a major role in ciliogenesis. This Pongo abelii (Sumatran orangutan) protein is Ataxin-10 (ATXN10).